The chain runs to 368 residues: Agmatine deiminase (368 aa).

The active-site Amidino-cysteine intermediate is Cys-357.

It belongs to the agmatine deiminase family. Homodimer.

It carries out the reaction agmatine + H2O = N-carbamoylputrescine + NH4(+). It participates in amine and polyamine biosynthesis; putrescine biosynthesis via agmatine pathway; N-carbamoylputrescine from agmatine: step 1/1. Mediates the hydrolysis of agmatine into N-carbamoylputrescine in the arginine decarboxylase (ADC) pathway of putrescine biosynthesis, a basic polyamine. The sequence is that of Agmatine deiminase from Pseudomonas aeruginosa (strain UCBPP-PA14).